A 524-amino-acid polypeptide reads, in one-letter code: Bifunctional purine biosynthesis protein PurH (524 aa).

The region spanning 1-149 (MSDPLIKRAL…KNNESVTVLT (149 aa)) is the MGS-like domain.

Belongs to the PurH family.

It catalyses the reaction (6R)-10-formyltetrahydrofolate + 5-amino-1-(5-phospho-beta-D-ribosyl)imidazole-4-carboxamide = 5-formamido-1-(5-phospho-D-ribosyl)imidazole-4-carboxamide + (6S)-5,6,7,8-tetrahydrofolate. It carries out the reaction IMP + H2O = 5-formamido-1-(5-phospho-D-ribosyl)imidazole-4-carboxamide. The protein operates within purine metabolism; IMP biosynthesis via de novo pathway; 5-formamido-1-(5-phospho-D-ribosyl)imidazole-4-carboxamide from 5-amino-1-(5-phospho-D-ribosyl)imidazole-4-carboxamide (10-formyl THF route): step 1/1. Its pathway is purine metabolism; IMP biosynthesis via de novo pathway; IMP from 5-formamido-1-(5-phospho-D-ribosyl)imidazole-4-carboxamide: step 1/1. The sequence is that of Bifunctional purine biosynthesis protein PurH from Chlorobium luteolum (strain DSM 273 / BCRC 81028 / 2530) (Pelodictyon luteolum).